Reading from the N-terminus, the 383-residue chain is Mannan endo-1,4-beta-mannosidase (383 aa).

The first 35 residues, Met-1–Ala-35, serve as a signal peptide directing secretion. In terms of domain architecture, CBM10 spans Gly-339 to Arg-377.

The protein belongs to the glycosyl hydrolase 5 (cellulase A) family. Monomer.

It catalyses the reaction Random hydrolysis of (1-&gt;4)-beta-D-mannosidic linkages in mannans, galactomannans and glucomannans.. This chain is Mannan endo-1,4-beta-mannosidase (manA), found in Streptomyces lividans.